The following is a 554-amino-acid chain: Arginine--tRNA ligase (554 aa).

Residues 132-142 (ANPTGPIHLGG) carry the 'HIGH' region motif.

Belongs to the class-I aminoacyl-tRNA synthetase family. Monomer.

It localises to the cytoplasm. It carries out the reaction tRNA(Arg) + L-arginine + ATP = L-arginyl-tRNA(Arg) + AMP + diphosphate. This chain is Arginine--tRNA ligase, found in Clavibacter sepedonicus (Clavibacter michiganensis subsp. sepedonicus).